Reading from the N-terminus, the 728-residue chain is FYN-binding protein 2 (728 aa).

Disordered stretches follow at residues 17 to 76, 250 to 287, and 367 to 390; these read QNLD…PLQP, QAPEKQPDVRHHHLPKTKPLPSIDSLGPPPPKPSRPPI, and PGKNFPYPEPSAKHEDKKMKEKQP. The span at 42-75 shows a compositional bias: polar residues; it reads GTQSTQILANGKPLSSNHKQRTPYCSSSESQPLQ. Positions 276 to 285 are enriched in pro residues; sequence GPPPPKPSRP. Residues 377–390 show a composition bias toward basic and acidic residues; the sequence is SAKHEDKKMKEKQP. Y491 bears the Phosphotyrosine mark. The SH2-binding; to LCP2 signature appears at 521 to 524; that stretch reads YEDV. Y587 carries the post-translational modification Phosphotyrosine. An SH3 domain is found at 664–724; the sequence is IVINTAVACS…LIEHLDFKHQ (61 aa).

In terms of assembly, interacts with SKAP1, LCK and FYN. The phosphorylated form interacts with LCP2. Phosphorylation is required for its function in T-cell activation. Expressed in T-cells (at protein level). Widely expressed.

It localises to the membrane raft. Adapter protein that plays a role in T-cell receptor (TCR)-mediated activation of signaling pathways. Required for T-cell activation and integrin-mediated T-cell adhesion in response to TCR stimulation. The chain is FYN-binding protein 2 from Homo sapiens (Human).